The following is a 120-amino-acid chain: FK506-binding protein 1B (120 aa).

Residues 1–24 are disordered; sequence MNPPQGVTKTILRPGNGRDSPHTG. One can recognise a PPIase FKBP-type domain in the interval 24 to 120; the sequence is GDTVIIDYTG…LVLYVCSPAG (97 aa).

It belongs to the FKBP-type PPIase family. FKBP1 subfamily.

The catalysed reaction is [protein]-peptidylproline (omega=180) = [protein]-peptidylproline (omega=0). Its function is as follows. PPIases accelerate the folding of proteins. It catalyzes the cis-trans isomerization of proline imidic peptide bonds in oligopeptides. This Emericella nidulans (strain FGSC A4 / ATCC 38163 / CBS 112.46 / NRRL 194 / M139) (Aspergillus nidulans) protein is FK506-binding protein 1B (FKBP3).